Reading from the N-terminus, the 212-residue chain is Adenylate kinase (212 aa).

Residue 10-15 (GAGKGT) coordinates ATP. An NMP region spans residues 30–59 (ALGDIFRTIIKTSTSEAELINNYVKQGELV). Residues Arg-36, 57–59 (ELV), 85–88 (GYPR), and Gln-92 contribute to the AMP site. The tract at residues 122-160 (GRYSCKNCRKIYNSYFLQPKTDNVCDVCGSSTFDYRKDD) is LID. Residue Arg-123 coordinates ATP. Cys-126 and Cys-129 together coordinate Zn(2+). ATP is bound at residue 132–133 (IY). Residues Cys-146 and Cys-149 each contribute to the Zn(2+) site. AMP-binding residues include Arg-157 and Arg-168. Lys-196 serves as a coordination point for ATP.

Belongs to the adenylate kinase family. Monomer.

The protein resides in the cytoplasm. The enzyme catalyses AMP + ATP = 2 ADP. It participates in purine metabolism; AMP biosynthesis via salvage pathway; AMP from ADP: step 1/1. In terms of biological role, catalyzes the reversible transfer of the terminal phosphate group between ATP and AMP. Plays an important role in cellular energy homeostasis and in adenine nucleotide metabolism. The protein is Adenylate kinase of Rickettsia akari (strain Hartford).